The sequence spans 228 residues: Ornithine decarboxylase antizyme 1 (228 aa).

The interval 17–55 (REKEGDKPSATIHASRTMPLLSLHSRGGSSSESSRVSLH) is disordered. The span at 36–55 (LLSLHSRGGSSSESSRVSLH) shows a compositional bias: low complexity.

It belongs to the ODC antizyme family. Interacts with ODC1 and thereby sterically blocks ODC homodimerization. Forms a ternary complex with PSMB4 and OAZ1 before PSMB4 is incorporated into the 20S proteasome. Interacts with AZIN2; this interaction disrupts the interaction between the antizyme and ODC1. Interacts with FAM171A1.

In terms of biological role, ornithine decarboxylase (ODC) antizyme protein that negatively regulates ODC activity and intracellular polyamine biosynthesis and uptake in response to increased intracellular polyamine levels. Binds to ODC monomers, inhibiting the assembly of the functional ODC homodimer, and targets the monomers for ubiquitin-independent proteolytic destruction by the 26S proteasome. Triggers ODC degradation by inducing the exposure of a cryptic proteasome-interacting surface of ODC. Stabilizes AZIN2 by interfering with its ubiquitination. Also inhibits cellular uptake of polyamines by inactivating the polyamine uptake transporter. SMAD1/OAZ1/PSMB4 complex mediates the degradation of the CREBBP/EP300 repressor SNIP1. Involved in the translocation of AZIN2 from ER-Golgi intermediate compartment (ERGIC) to the cytosol. In Homo sapiens (Human), this protein is Ornithine decarboxylase antizyme 1 (OAZ1).